The sequence spans 294 residues: 4-hydroxy-tetrahydrodipicolinate synthase (294 aa).

Thr-46 is a pyruvate binding site. The active-site Proton donor/acceptor is the Tyr-134. Lys-163 acts as the Schiff-base intermediate with substrate in catalysis. Ile-205 contributes to the pyruvate binding site.

The protein belongs to the DapA family. As to quaternary structure, homotetramer; dimer of dimers.

The protein localises to the cytoplasm. It catalyses the reaction L-aspartate 4-semialdehyde + pyruvate = (2S,4S)-4-hydroxy-2,3,4,5-tetrahydrodipicolinate + H2O + H(+). It functions in the pathway amino-acid biosynthesis; L-lysine biosynthesis via DAP pathway; (S)-tetrahydrodipicolinate from L-aspartate: step 3/4. Catalyzes the condensation of (S)-aspartate-beta-semialdehyde [(S)-ASA] and pyruvate to 4-hydroxy-tetrahydrodipicolinate (HTPA). This Clostridium tetani (strain Massachusetts / E88) protein is 4-hydroxy-tetrahydrodipicolinate synthase.